The chain runs to 907 residues: Collagen alpha-2(I) chain (907 aa).

2 disordered regions span residues 1-183 (GPMG…GIPG) and 199-907 (IPGP…PGPS). The span at 19–33 (AGEDGHPGKPGRERG) shows a compositional bias: basic and acidic residues. Low complexity-rich tracts occupy residues 101-130 (VGAP…SAGP), 155-169 (AGPR…VSGP), and 206-221 (PGPV…RGIV). Position 260 is a deamidated asparagine (N260). P272 is modified (4-hydroxyproline). Composition is skewed to low complexity over residues 272–281 (PGIRGSRGIP), 292–307 (PPGS…VRGP), 340–362 (PAGI…RGEP), 424–441 (PGES…SRGP), 453–475 (EPGV…PGER), 495–507 (APGA…PAGA), 535–555 (VGPA…QPGA), and 566–581 (NGPV…AGPA). Over residues 591–600 (GSRGDGGPPG) the composition is skewed to gly residues. 5 stretches are compositionally biased toward low complexity: residues 601–611 (ATGFPGAAGRT), 664–691 (EAGT…IPGS), 706–745 (EPGP…NPGN), 756–766 (NSGPVGAAGAP), and 783–804 (EPGP…PSGP). Basic and acidic residues predominate over residues 808–819 (RGDKGEPGDKGP). Residues 892 to 907 (AGPPGPPGPPGPPGPS) are compositionally biased toward pro residues.

This sequence belongs to the fibrillar collagen family. Trimers of one alpha 2(I) and two alpha 1(I) chains. Interacts (via C-terminus) with TMEM131 (via PapD-L domain); the interaction is direct and is involved in assembly and TRAPPIII ER-to-Golgi transport complex-dependent secretion of collagen. Post-translationally, prolines at the third position of the tripeptide repeating unit (G-X-Y) are hydroxylated in some or all of the chains. As to expression, forms the fibrils of tendon, ligaments and bones. In bones, the fibrils are mineralized with calcium hydroxyapatite.

The protein resides in the secreted. It is found in the extracellular space. It localises to the extracellular matrix. Its function is as follows. Type I collagen is a member of group I collagen (fibrillar forming collagen). The chain is Collagen alpha-2(I) chain from Macrauchenia sp.